A 540-amino-acid polypeptide reads, in one-letter code: Chaperonin GroEL (540 aa).

ATP-binding positions include 30-33 (TLGP), Lys-51, 87-91 (DGTTT), Gly-415, 479-481 (NAA), and Asp-495.

It belongs to the chaperonin (HSP60) family. In terms of assembly, forms a cylinder of 14 subunits composed of two heptameric rings stacked back-to-back. Interacts with the co-chaperonin GroES.

The protein localises to the cytoplasm. It catalyses the reaction ATP + H2O + a folded polypeptide = ADP + phosphate + an unfolded polypeptide.. Together with its co-chaperonin GroES, plays an essential role in assisting protein folding. The GroEL-GroES system forms a nano-cage that allows encapsulation of the non-native substrate proteins and provides a physical environment optimized to promote and accelerate protein folding. This chain is Chaperonin GroEL, found in Pluralibacter gergoviae (Enterobacter gergoviae).